The following is a 225-amino-acid chain: Uridine kinase (225 aa).

12-19 (GGTGAGKT) contacts ATP.

The protein belongs to the uridine kinase family.

The protein localises to the cytoplasm. The catalysed reaction is uridine + ATP = UMP + ADP + H(+). It catalyses the reaction cytidine + ATP = CMP + ADP + H(+). It participates in pyrimidine metabolism; CTP biosynthesis via salvage pathway; CTP from cytidine: step 1/3. The protein operates within pyrimidine metabolism; UMP biosynthesis via salvage pathway; UMP from uridine: step 1/1. In Halobacterium salinarum (strain ATCC 700922 / JCM 11081 / NRC-1) (Halobacterium halobium), this protein is Uridine kinase.